A 402-amino-acid chain; its full sequence is Argininosuccinate synthase (402 aa).

ATP-binding positions include 13-21 (AYSGGLDTS) and Ala-40. Positions 91 and 96 each coordinate L-citrulline. Residue Gly-121 coordinates ATP. 3 residues coordinate L-aspartate: Thr-123, Asn-127, and Asp-128. Residue Asn-127 participates in L-citrulline binding. L-citrulline contacts are provided by Arg-131, Ser-180, Ser-189, Glu-265, and Tyr-277.

This sequence belongs to the argininosuccinate synthase family. Type 1 subfamily. As to quaternary structure, homotetramer.

Its subcellular location is the cytoplasm. The catalysed reaction is L-citrulline + L-aspartate + ATP = 2-(N(omega)-L-arginino)succinate + AMP + diphosphate + H(+). The protein operates within amino-acid biosynthesis; L-arginine biosynthesis; L-arginine from L-ornithine and carbamoyl phosphate: step 2/3. The sequence is that of Argininosuccinate synthase from Leptospira biflexa serovar Patoc (strain Patoc 1 / Ames).